The sequence spans 407 residues: Carbamoyl phosphate synthase small chain (407 aa).

Residues Met-1–Ala-205 form a CPSase region. The L-glutamine site is built by Ser-60, Gly-257, and Gly-259. A Glutamine amidotransferase type-1 domain is found at His-209–Gln-397. Residue Cys-286 is the Nucleophile of the active site. Positions 287, 290, 328, 330, and 331 each coordinate L-glutamine. Active-site residues include His-370 and Glu-372.

Belongs to the CarA family. In terms of assembly, composed of two chains; the small (or glutamine) chain promotes the hydrolysis of glutamine to ammonia, which is used by the large (or ammonia) chain to synthesize carbamoyl phosphate. Tetramer of heterodimers (alpha,beta)4.

The enzyme catalyses hydrogencarbonate + L-glutamine + 2 ATP + H2O = carbamoyl phosphate + L-glutamate + 2 ADP + phosphate + 2 H(+). It catalyses the reaction L-glutamine + H2O = L-glutamate + NH4(+). The protein operates within amino-acid biosynthesis; L-arginine biosynthesis; carbamoyl phosphate from bicarbonate: step 1/1. It participates in pyrimidine metabolism; UMP biosynthesis via de novo pathway; (S)-dihydroorotate from bicarbonate: step 1/3. Functionally, small subunit of the glutamine-dependent carbamoyl phosphate synthetase (CPSase). CPSase catalyzes the formation of carbamoyl phosphate from the ammonia moiety of glutamine, carbonate, and phosphate donated by ATP, constituting the first step of 2 biosynthetic pathways, one leading to arginine and/or urea and the other to pyrimidine nucleotides. The small subunit (glutamine amidotransferase) binds and cleaves glutamine to supply the large subunit with the substrate ammonia. This chain is Carbamoyl phosphate synthase small chain, found in Brucella abortus (strain S19).